A 441-amino-acid polypeptide reads, in one-letter code: Ribosomal protein uS12 methylthiotransferase RimO (441 aa).

The region spanning 8–118 (PKIGFVSLGC…VLQHVHHYVP (111 aa)) is the MTTase N-terminal domain. The [4Fe-4S] cluster site is built by Cys17, Cys53, Cys82, Cys150, Cys154, and Cys157. The region spanning 136-373 (LTPRHYAYLK…MALQQQISAE (238 aa)) is the Radical SAM core domain. Residues 376-441 (QEKVGREILV…DEYDLWGSLV (66 aa)) form the TRAM domain.

This sequence belongs to the methylthiotransferase family. RimO subfamily. It depends on [4Fe-4S] cluster as a cofactor.

Its subcellular location is the cytoplasm. The enzyme catalyses L-aspartate(89)-[ribosomal protein uS12]-hydrogen + (sulfur carrier)-SH + AH2 + 2 S-adenosyl-L-methionine = 3-methylsulfanyl-L-aspartate(89)-[ribosomal protein uS12]-hydrogen + (sulfur carrier)-H + 5'-deoxyadenosine + L-methionine + A + S-adenosyl-L-homocysteine + 2 H(+). Its function is as follows. Catalyzes the methylthiolation of an aspartic acid residue of ribosomal protein uS12. The sequence is that of Ribosomal protein uS12 methylthiotransferase RimO from Cronobacter sakazakii (strain ATCC BAA-894) (Enterobacter sakazakii).